The sequence spans 135 residues: Transcription antitermination protein NusB (135 aa).

Residues alanine 115 to serine 135 are disordered.

The protein belongs to the NusB family.

Involved in transcription antitermination. Required for transcription of ribosomal RNA (rRNA) genes. Binds specifically to the boxA antiterminator sequence of the ribosomal RNA (rrn) operons. This is Transcription antitermination protein NusB from Frankia casuarinae (strain DSM 45818 / CECT 9043 / HFP020203 / CcI3).